The following is a 241-amino-acid chain: Probable transcriptional regulatory protein Rpic_2388 (241 aa).

Belongs to the TACO1 family.

The protein localises to the cytoplasm. The sequence is that of Probable transcriptional regulatory protein Rpic_2388 from Ralstonia pickettii (strain 12J).